Consider the following 150-residue polypeptide: Large ribosomal subunit protein bL9 (150 aa).

Belongs to the bacterial ribosomal protein bL9 family.

Its function is as follows. Binds to the 23S rRNA. This chain is Large ribosomal subunit protein bL9, found in Shewanella sp. (strain MR-4).